Here is a 425-residue protein sequence, read N- to C-terminus: tRNA(Ile)-lysidine synthase (425 aa).

27–32 lines the ATP pocket; that stretch reads SGGLDS.

It belongs to the tRNA(Ile)-lysidine synthase family.

It is found in the cytoplasm. It carries out the reaction cytidine(34) in tRNA(Ile2) + L-lysine + ATP = lysidine(34) in tRNA(Ile2) + AMP + diphosphate + H(+). Functionally, ligates lysine onto the cytidine present at position 34 of the AUA codon-specific tRNA(Ile) that contains the anticodon CAU, in an ATP-dependent manner. Cytidine is converted to lysidine, thus changing the amino acid specificity of the tRNA from methionine to isoleucine. This is tRNA(Ile)-lysidine synthase from Streptococcus pneumoniae serotype 19F (strain G54).